Consider the following 412-residue polypeptide: Imidazolonepropionase (412 aa).

Histidine 76 and histidine 78 together coordinate Fe(3+). Zn(2+) contacts are provided by histidine 76 and histidine 78. Arginine 85, tyrosine 148, and histidine 181 together coordinate 4-imidazolone-5-propanoate. Tyrosine 148 lines the N-formimidoyl-L-glutamate pocket. Position 242 (histidine 242) interacts with Fe(3+). Histidine 242 provides a ligand contact to Zn(2+). Glutamate 245 lines the 4-imidazolone-5-propanoate pocket. Fe(3+) is bound at residue aspartate 317. Aspartate 317 contributes to the Zn(2+) binding site. Residues asparagine 319 and glycine 321 each coordinate N-formimidoyl-L-glutamate. Serine 322 is a 4-imidazolone-5-propanoate binding site.

Belongs to the metallo-dependent hydrolases superfamily. HutI family. Zn(2+) serves as cofactor. The cofactor is Fe(3+).

It is found in the cytoplasm. The enzyme catalyses 4-imidazolone-5-propanoate + H2O = N-formimidoyl-L-glutamate. Its pathway is amino-acid degradation; L-histidine degradation into L-glutamate; N-formimidoyl-L-glutamate from L-histidine: step 3/3. Its function is as follows. Catalyzes the hydrolytic cleavage of the carbon-nitrogen bond in imidazolone-5-propanoate to yield N-formimidoyl-L-glutamate. It is the third step in the universal histidine degradation pathway. The chain is Imidazolonepropionase from Staphylococcus aureus (strain MSSA476).